The chain runs to 493 residues: Alpha-amylase-related protein (493 aa).

A signal peptide spans 1–19 (MFKFATAVILCLAASSTLA). At Gln20 the chain carries Pyrrolidone carboxylic acid. Cys47 and Cys103 form a disulfide bridge. Ca(2+) is bound by residues Asn117, Gln168, and Asp177. A disulfide bridge connects residues Cys156 and Cys170. Residue Arg205 coordinates chloride. The Nucleophile role is filled by Asp207. His211 contacts Ca(2+). The active-site Proton donor is Glu244. Chloride-binding residues include Asn307 and Arg342. Disulfide bonds link Cys375-Cys381, Cys417-Cys440, and Cys447-Cys459.

This sequence belongs to the glycosyl hydrolase 13 family. Monomer. Ca(2+) is required as a cofactor. Requires chloride as cofactor.

It is found in the secreted. It carries out the reaction Endohydrolysis of (1-&gt;4)-alpha-D-glucosidic linkages in polysaccharides containing three or more (1-&gt;4)-alpha-linked D-glucose units.. This is Alpha-amylase-related protein (Amyrel) from Drosophila ananassae (Fruit fly).